The following is a 352-amino-acid chain: Protein Wnt-3a (352 aa).

An N-terminal signal peptide occupies residues 1–18 (MAPLGYLLVLCSLKQALG). Intrachain disulfides connect cysteine 77/cysteine 88, cysteine 128/cysteine 136, cysteine 138/cysteine 155, cysteine 203/cysteine 217, cysteine 205/cysteine 212, cysteine 281/cysteine 312, cysteine 297/cysteine 307, cysteine 311/cysteine 351, cysteine 327/cysteine 342, cysteine 329/cysteine 339, and cysteine 334/cysteine 335. Asparagine 87 carries N-linked (GlcNAc...) asparagine glycosylation. A lipid anchor (O-palmitoleoyl serine; by PORCN) is attached at serine 209. Asparagine 298 carries an N-linked (GlcNAc...) asparagine glycan.

Belongs to the Wnt family. As to quaternary structure, forms a soluble 1:1 complex with AFM; this prevents oligomerization and is required for prolonged biological activity. The complex with AFM may represent the physiological form in body fluids. Homooligomer; disulfide-linked, leading to inactivation. Interacts with APCDD1 and WLS. Component of the Wnt-Fzd-LRP5-LRP6 signaling complex that contains a WNT protein, a FZD protein and LRP5 or LRP6. Interacts directly in the complex with LRP6. Interacts with PORCN. Interacts with glypican GPC3. Interacts with PKD1 (via extracellular domain). Interacts with FZD5. In terms of processing, proteolytic processing by TIKI1 and TIKI2 promotes oxidation and formation of large disulfide-bond oligomers, leading to inactivation of WNT3A. Disulfide bonds have critical and distinct roles in secretion and activity. Loss of each conserved cysteine in WNT3A results in high molecular weight oxidized Wnt oligomers, which are formed through inter-Wnt disulfide bonding. Post-translationally, palmitoleoylation by PORCN is required for efficient binding to frizzled receptors. Palmitoleoylation is required for proper trafficking to cell surface, vacuolar acidification is critical to release palmitoleoylated WNT3A from WLS in secretory vesicles. Depalmitoleoylated by NOTUM, leading to inhibit Wnt signaling pathway, possibly by promoting disulfide bond formation and oligomerization. In terms of tissue distribution, dorsal portion of the neural tube (developing roof plate), and mesenchyme tissue surrounding the umbilical veins.

It is found in the secreted. The protein resides in the extracellular space. It localises to the extracellular matrix. Its function is as follows. Ligand for members of the frizzled family of seven transmembrane receptors. Functions in the canonical Wnt signaling pathway that results in activation of transcription factors of the TCF/LEF family. Required for normal embryonic mesoderm development and formation of caudal somites. Required for normal morphogenesis of the developing neural tube. Mediates self-renewal of the stem cells at the bottom on intestinal crypts (in vitro). The polypeptide is Protein Wnt-3a (Wnt3a) (Mus musculus (Mouse)).